A 276-amino-acid chain; its full sequence is Large ribosomal subunit protein uL2 (276 aa).

Residues P218–K276 are disordered. Positions K258–K276 are enriched in basic residues.

This sequence belongs to the universal ribosomal protein uL2 family. In terms of assembly, part of the 50S ribosomal subunit. Forms a bridge to the 30S subunit in the 70S ribosome.

Its function is as follows. One of the primary rRNA binding proteins. Required for association of the 30S and 50S subunits to form the 70S ribosome, for tRNA binding and peptide bond formation. It has been suggested to have peptidyltransferase activity; this is somewhat controversial. Makes several contacts with the 16S rRNA in the 70S ribosome. This chain is Large ribosomal subunit protein uL2, found in Finegoldia magna (strain ATCC 29328 / DSM 20472 / WAL 2508) (Peptostreptococcus magnus).